The primary structure comprises 242 residues: 4-hydroxy-tetrahydrodipicolinate reductase (242 aa).

NAD(+)-binding positions include 8 to 13 (GAKGRM), 75 to 77 (GTT), and 99 to 102 (ATNM). His-131 serves as the catalytic Proton donor/acceptor. His-132 is a binding site for (S)-2,3,4,5-tetrahydrodipicolinate. Lys-135 (proton donor) is an active-site residue. 141-142 (GT) serves as a coordination point for (S)-2,3,4,5-tetrahydrodipicolinate.

It belongs to the DapB family.

The protein localises to the cytoplasm. It catalyses the reaction (S)-2,3,4,5-tetrahydrodipicolinate + NAD(+) + H2O = (2S,4S)-4-hydroxy-2,3,4,5-tetrahydrodipicolinate + NADH + H(+). It carries out the reaction (S)-2,3,4,5-tetrahydrodipicolinate + NADP(+) + H2O = (2S,4S)-4-hydroxy-2,3,4,5-tetrahydrodipicolinate + NADPH + H(+). It participates in amino-acid biosynthesis; L-lysine biosynthesis via DAP pathway; (S)-tetrahydrodipicolinate from L-aspartate: step 4/4. Catalyzes the conversion of 4-hydroxy-tetrahydrodipicolinate (HTPA) to tetrahydrodipicolinate. The polypeptide is 4-hydroxy-tetrahydrodipicolinate reductase (Campylobacter jejuni subsp. jejuni serotype O:2 (strain ATCC 700819 / NCTC 11168)).